The following is a 267-amino-acid chain: 4-hydroxy-tetrahydrodipicolinate reductase (267 aa).

Residues 12-17, 100-102, and 126-129 contribute to the NAD(+) site; these read GPRGRM, GTT, and APNF. Catalysis depends on His-156, which acts as the Proton donor/acceptor. (S)-2,3,4,5-tetrahydrodipicolinate is bound at residue His-157. Lys-160 functions as the Proton donor in the catalytic mechanism. Residue 166-167 participates in (S)-2,3,4,5-tetrahydrodipicolinate binding; sequence GT.

It belongs to the DapB family.

The protein resides in the cytoplasm. It catalyses the reaction (S)-2,3,4,5-tetrahydrodipicolinate + NAD(+) + H2O = (2S,4S)-4-hydroxy-2,3,4,5-tetrahydrodipicolinate + NADH + H(+). The catalysed reaction is (S)-2,3,4,5-tetrahydrodipicolinate + NADP(+) + H2O = (2S,4S)-4-hydroxy-2,3,4,5-tetrahydrodipicolinate + NADPH + H(+). Its pathway is amino-acid biosynthesis; L-lysine biosynthesis via DAP pathway; (S)-tetrahydrodipicolinate from L-aspartate: step 4/4. In terms of biological role, catalyzes the conversion of 4-hydroxy-tetrahydrodipicolinate (HTPA) to tetrahydrodipicolinate. In Bacillus velezensis (strain DSM 23117 / BGSC 10A6 / LMG 26770 / FZB42) (Bacillus amyloliquefaciens subsp. plantarum), this protein is 4-hydroxy-tetrahydrodipicolinate reductase.